Consider the following 146-residue polypeptide: Dihydroneopterin aldolase 1 (146 aa).

Substrate-binding positions include Glu41, Tyr73, and Leu92–Glu93. Lys119 functions as the Proton donor/acceptor in the catalytic mechanism.

This sequence belongs to the DHNA family. As to quaternary structure, homooctamer. Forms a hollow cylinder assembled from two ring-shaped tetramers. As to expression, expressed in roots, leaves, stems and siliques.

The enzyme catalyses 7,8-dihydroneopterin = 6-hydroxymethyl-7,8-dihydropterin + glycolaldehyde. The protein operates within cofactor biosynthesis; tetrahydrofolate biosynthesis; 2-amino-4-hydroxy-6-hydroxymethyl-7,8-dihydropteridine diphosphate from 7,8-dihydroneopterin triphosphate: step 3/4. In terms of biological role, catalyzes the conversion of 7,8-dihydroneopterin into 6-hydroxymethyl-7,8-dihydropterin, a biosynthetic precursor of the vitamin tetrahydrofolate. Can use L-threo-dihydroneopterin and D-erythro-dihydroneopterin as substrates for the formation of 6-hydroxymethyldihydropterin, but it can also catalyze the epimerization of carbon 2' of dihydroneopterin and dihydromonapterin. The sequence is that of Dihydroneopterin aldolase 1 from Arabidopsis thaliana (Mouse-ear cress).